The sequence spans 853 residues: DNA mismatch repair protein MutS (853 aa).

614-621 lines the ATP pocket; the sequence is GPNMGGKS.

It belongs to the DNA mismatch repair MutS family.

Its function is as follows. This protein is involved in the repair of mismatches in DNA. It is possible that it carries out the mismatch recognition step. This protein has a weak ATPase activity. In Escherichia coli O6:K15:H31 (strain 536 / UPEC), this protein is DNA mismatch repair protein MutS.